Here is a 216-residue protein sequence, read N- to C-terminus: UPF0301 protein BBta_6966 (216 aa).

Belongs to the UPF0301 (AlgH) family.

The protein is UPF0301 protein BBta_6966 of Bradyrhizobium sp. (strain BTAi1 / ATCC BAA-1182).